Here is a 381-residue protein sequence, read N- to C-terminus: tRNA (guanine(6)-N2)-methyltransferase (381 aa).

Residues 43 to 157 (KLIPKINYLS…FDELIVGIDT (115 aa)) enclose the THUMP domain. Residues 173–177 (HPAHL), 204–206 (SGT), Asp-261, 289–290 (DA), and Asn-306 contribute to the S-adenosyl-L-methionine site.

The protein belongs to the methyltransferase superfamily.

It localises to the cytoplasm. It carries out the reaction guanosine(6) in tRNA + S-adenosyl-L-methionine = N(2)-methylguanosine(6) in tRNA + S-adenosyl-L-homocysteine + H(+). S-adenosyl-L-methionine-dependent methyltransferase that catalyzes the methylation of the guanosine nucleotide at position 6 (m2G6) in tRNA(Cys). This Methanocaldococcus jannaschii (strain ATCC 43067 / DSM 2661 / JAL-1 / JCM 10045 / NBRC 100440) (Methanococcus jannaschii) protein is tRNA (guanine(6)-N2)-methyltransferase.